The chain runs to 452 residues: Friend leukemia integration 1 transcription factor (452 aa).

At serine 39 the chain carries Phosphoserine. Positions 112 to 198 (PPPPNMTTNE…SHLSYLRESS (87 aa)) constitute a PNT domain. The disordered stretch occupies residues 209 to 271 (DQSSRLSVKE…PYQILGPTSS (63 aa)). The span at 215 to 226 (SVKEDPSYDSVR) shows a compositional bias: basic and acidic residues. A compositionally biased stretch (polar residues) spans 248–257 (QTISKNTEQR). A DNA-binding region (ETS) is located at residues 281–361 (IQLWQFLLEL…HGKRYAYKFD (81 aa)). The interval 433–452 (NPNVPRHPNTHVPSHLGSYY) is disordered.

Belongs to the ETS family. In terms of assembly, can form homodimers or heterodimers with ETV6/TEL1.

Its subcellular location is the nucleus. Functionally, sequence-specific transcriptional activator. Recognizes the DNA sequence 5'-C[CA]GGAAGT-3'. This chain is Friend leukemia integration 1 transcription factor (FLI1), found in Homo sapiens (Human).